A 613-amino-acid chain; its full sequence is Probable hydrolase clz13 (613 aa).

A signal peptide spans 1–25 (MCLLSMRFTVAILLVLLSHCGGSHA). 7 N-linked (GlcNAc...) asparagine glycosylation sites follow: asparagine 61, asparagine 89, asparagine 286, asparagine 422, asparagine 456, asparagine 477, and asparagine 581.

Belongs to the beta-lactamase family.

It functions in the pathway secondary metabolite biosynthesis. In terms of biological role, probable hydrolase; part of the gene cluster that mediates the biosynthesis of squalestatin S1 (SQS1, also known as zaragozic acid A), a heavily oxidized fungal polyketide that offers potent cholesterol lowering activity by targeting squalene synthase (SS). SQS1 is composed of a 2,8-dioxobicyclic[3.2.1]octane-3,4,5-tricarboxyclic acid core that is connected to two lipophilic polyketide arms. These initial steps feature the priming of an unusual benzoic acid starter unit onto the highly reducing polyketide synthase clz14, followed by oxaloacetate extension and product release to generate a tricarboxylic acid containing product. The phenylalanine ammonia lyase (PAL) clz10 and the acyl-CoA ligase clz12 are involved in transforming phenylalanine into benzoyl-CoA. The citrate synthase-like protein clz17 is involved in connecting the C-alpha-carbons of the hexaketide chain and oxaloacetate to afford the tricarboxylic acid unit. The potential hydrolytic enzymes, clz11 and clz13, are in close proximity to pks2 and may participate in product release. On the other side, the tetraketide arm is synthesized by a the squalestatin tetraketide synthase clz2 and enzymatically esterified to the core in the last biosynthetic step, by the acetyltransferase clz6. The biosynthesis of the tetraketide must involve 3 rounds of chain extension. After the first and second rounds methyl-transfer occurs, and in all rounds of extension the ketoreductase and dehydratase are active. The enoyl reductase and C-MeT of clz2 are not active in the final round of extension. The acetyltransferase clz6 appears to have a broad substrate selectivity for its acyl CoA substrate, allowing the in vitro synthesis of novel squalestatins. The biosynthesis of SQS1 requires several oxidative steps likely performed by oxidoreductases clz3, clz15 and clz16. Finally, in support of the identification of the cluster as being responsible for SQS1 production, the cluster contains a gene encoding a putative squalene synthase (SS) clz20, suggesting a likely mechanism for self-resistance. The protein is Probable hydrolase clz13 of Cochliobolus lunatus (Filamentous fungus).